The primary structure comprises 411 residues: Putative odorant receptor 59c (411 aa).

The Cytoplasmic portion of the chain corresponds to 1–46; sequence MTKFFFKRLQTAPLDQEVSSLDASDYYYRIAFFLGWTPPKGALLRW. A helical membrane pass occupies residues 47–67; sequence IYSLWTLTTMWLGIVYLPLGL. The Extracellular portion of the chain corresponds to 68 to 86; it reads SLTYVKHFDRFTPTEFLTS. A helical membrane pass occupies residues 87 to 107; sequence LQVDINCIGNVIKSCVTYSQM. Residues 108 to 139 are Cytoplasmic-facing; that stretch reads WRFRRMNELISSLDKRCVTTTQRRIFHKMVAR. A helical transmembrane segment spans residues 140-160; it reads VNLIVILFLSTYLGFCFLTLF. Residues 161-185 are Extracellular-facing; sequence TSVFAGKAPWQLYNPLVDWRKGHWQ. A helical membrane pass occupies residues 186 to 206; that stretch reads LWIASILEYCVVSIGTMQELM. The Cytoplasmic segment spans residues 207 to 271; it reads SDTYAIVFIS…QIIRPILSIT (65 aa). A helical transmembrane segment spans residues 272 to 292; that stretch reads IFAQFMLVGIDLGLAAISILF. The Extracellular portion of the chain corresponds to 293–296; the sequence is FPNT. The helical transmembrane segment at 297-317 threads the bilayer; the sequence is IWTIMANVSFIVAICTESFPC. Topologically, residues 318–369 are cytoplasmic; it reads CMLCEHLIEDSVHVSNALFHSNWITADRSYKSAVLYFLHRAQQPIQFTAGSI. The chain crosses the membrane as a helical span at residues 370 to 390; that stretch reads FPISVQSNIAVAKFAFTIITI. Residues 391–411 are Extracellular-facing; that stretch reads VNQMNLGEKFFSDRSNGDINP.

This sequence belongs to the insect chemoreceptor superfamily. Heteromeric odorant receptor channel (TC 1.A.69) family. Or2a subfamily. As to quaternary structure, interacts with Orco. Complexes exist early in the endomembrane system in olfactory sensory neurons (OSNs), coupling these complexes to the conserved ciliary trafficking pathway. Expressed in olfactory sensory neurons in the maxillary palp.

The protein localises to the cell membrane. Odorant receptor which mediates acceptance or avoidance behavior, depending on its substrates. The odorant receptor repertoire encodes a large collection of odor stimuli that vary widely in identity, intensity, and duration. May form a complex with Orco to form odorant-sensing units, providing sensitive and prolonged odorant signaling and calcium permeability. This Drosophila melanogaster (Fruit fly) protein is Putative odorant receptor 59c (Or59c).